A 215-amino-acid chain; its full sequence is Large ribosomal subunit protein uL4 (215 aa).

Residues 46–76 (TAKSKNRAEVSGGGRKPWAQKGGGRARAGSI) are disordered. Positions 56–71 (SGGGRKPWAQKGGGRA) are enriched in gly residues.

It belongs to the universal ribosomal protein uL4 family. As to quaternary structure, part of the 50S ribosomal subunit.

Functionally, one of the primary rRNA binding proteins, this protein initially binds near the 5'-end of the 23S rRNA. It is important during the early stages of 50S assembly. It makes multiple contacts with different domains of the 23S rRNA in the assembled 50S subunit and ribosome. Its function is as follows. Forms part of the polypeptide exit tunnel. This Helicobacter pylori (strain HPAG1) protein is Large ribosomal subunit protein uL4.